The primary structure comprises 183 residues: UPF0398 protein MCCL_1095 (183 aa).

It belongs to the UPF0398 family.

The polypeptide is UPF0398 protein MCCL_1095 (Macrococcus caseolyticus (strain JCSC5402) (Macrococcoides caseolyticum)).